Consider the following 150-residue polypeptide: Transcription antitermination protein NusB (150 aa).

The protein belongs to the NusB family.

Functionally, involved in transcription antitermination. Required for transcription of ribosomal RNA (rRNA) genes. Binds specifically to the boxA antiterminator sequence of the ribosomal RNA (rrn) operons. This chain is Transcription antitermination protein NusB, found in Saccharophagus degradans (strain 2-40 / ATCC 43961 / DSM 17024).